Here is a 205-residue protein sequence, read N- to C-terminus: Octanoyltransferase (205 aa).

The BPL/LPL catalytic domain occupies 30 to 205 (NSSDELVWLL…ILKKEFYKIF (176 aa)). Residues 68-75 (RGGKYTYH), 140-142 (AFG), and 153-155 (GIA) each bind substrate. Cysteine 171 serves as the catalytic Acyl-thioester intermediate.

Belongs to the LipB family.

Its subcellular location is the cytoplasm. The catalysed reaction is octanoyl-[ACP] + L-lysyl-[protein] = N(6)-octanoyl-L-lysyl-[protein] + holo-[ACP] + H(+). The protein operates within protein modification; protein lipoylation via endogenous pathway; protein N(6)-(lipoyl)lysine from octanoyl-[acyl-carrier-protein]: step 1/2. Catalyzes the transfer of endogenously produced octanoic acid from octanoyl-acyl-carrier-protein onto the lipoyl domains of lipoate-dependent enzymes. Lipoyl-ACP can also act as a substrate although octanoyl-ACP is likely to be the physiological substrate. This Wolbachia sp. subsp. Brugia malayi (strain TRS) protein is Octanoyltransferase.